The primary structure comprises 364 residues: Large ribosomal subunit protein bL27m (364 aa).

Residues 1-19 constitute a mitochondrion transit peptide; sequence MFSSSWQQVPKFVVQQVRT.

This sequence belongs to the bacterial ribosomal protein bL27 family.

It localises to the mitochondrion. Functionally, component of the large subunit of mitochondrial ribosome. This is Large ribosomal subunit protein bL27m (MRPL2) from Kluyveromyces lactis (strain ATCC 8585 / CBS 2359 / DSM 70799 / NBRC 1267 / NRRL Y-1140 / WM37) (Yeast).